A 291-amino-acid polypeptide reads, in one-letter code: 4-diphosphocytidyl-2-C-methyl-D-erythritol kinase (291 aa).

Residue Lys10 is part of the active site. ATP is bound at residue 94–104 (PVSAGLAGGSS). Asp136 is a catalytic residue.

This sequence belongs to the GHMP kinase family. IspE subfamily.

It catalyses the reaction 4-CDP-2-C-methyl-D-erythritol + ATP = 4-CDP-2-C-methyl-D-erythritol 2-phosphate + ADP + H(+). The protein operates within isoprenoid biosynthesis; isopentenyl diphosphate biosynthesis via DXP pathway; isopentenyl diphosphate from 1-deoxy-D-xylulose 5-phosphate: step 3/6. Its function is as follows. Catalyzes the phosphorylation of the position 2 hydroxy group of 4-diphosphocytidyl-2C-methyl-D-erythritol. The polypeptide is 4-diphosphocytidyl-2-C-methyl-D-erythritol kinase (Listeria innocua serovar 6a (strain ATCC BAA-680 / CLIP 11262)).